The sequence spans 216 residues: Probable GTP-binding protein EngB (216 aa).

In terms of domain architecture, EngB-type G spans 43–216 (DRIEVCFAGR…TLRSIIAHLD (174 aa)). GTP is bound by residues 51-58 (GRSNVGKS), 78-82 (GRTQE), 96-99 (DLPG), 163-166 (TKAD), and 197-199 (TSS). Serine 58 and threonine 80 together coordinate Mg(2+).

This sequence belongs to the TRAFAC class TrmE-Era-EngA-EngB-Septin-like GTPase superfamily. EngB GTPase family. The cofactor is Mg(2+).

Its function is as follows. Necessary for normal cell division and for the maintenance of normal septation. This chain is Probable GTP-binding protein EngB, found in Ruegeria sp. (strain TM1040) (Silicibacter sp.).